The primary structure comprises 237 residues: CD209 antigen-like protein D (237 aa).

At 1–54 the chain is on the cytoplasmic side; that stretch reads MSDSMESKTQQVVIPEDEECLMSGTRYSDISSRLQTKFGIKSLAEYTKQSRNPL. Residues 55 to 75 traverse the membrane as a helical; Signal-anchor for type II membrane protein segment; that stretch reads VLQLLSFLFLAGLLLIILILV. At 76 to 237 the chain is on the extracellular side; that stretch reads SKVPSSEVQN…KVSTSSCTTK (162 aa). The cysteines at positions 106 and 117 are disulfide-linked. The region spanning 112–227 is the C-type lectin domain; it reads FFNGSCYFFS…CDKLLFWICK (116 aa). N-linked (GlcNAc...) asparagine glycosylation is found at Asn-114 and Asn-129. Disulfide bonds link Cys-134–Cys-226 and Cys-205–Cys-218. Glu-196, Asn-198, Glu-203, Asn-214, and Asp-215 together coordinate Ca(2+).

The protein resides in the membrane. In terms of biological role, probable pathogen-recognition receptor. May mediate the endocytosis of pathogens which are subsequently degraded in lysosomal compartments. May recognize in a calcium-dependent manner high mannose N-linked oligosaccharides in a variety of pathogen antigens. This is CD209 antigen-like protein D (Cd209d) from Mus musculus (Mouse).